Here is an 862-residue protein sequence, read N- to C-terminus: Rab GTPase-binding effector protein 1 (862 aa).

An N-acetylalanine modification is found at A2. The stretch at 11–328 (DVSLQQRVAE…KDQEEDEQQR (318 aa)) forms a coiled coil. K282 carries the post-translational modification N6-acetyllysine. Disordered stretches follow at residues 315–340 (ELKK…KIDT) and 355–374 (EESS…THGS). S374, S377, and S407 each carry phosphoserine. Phosphothreonine is present on T408. S410 carries the post-translational modification Phosphoserine. Residues 534 to 816 (DMCSNYEKQL…LQTELDVSEQ (283 aa)) are a coiled coil.

This sequence belongs to the rabaptin family. Heterodimer with RABGEF1. The heterodimer binds RAB4A and RAB5A that have been activated by GTP-binding. Interacts with TSC2. Interacts with GGA1 (via GAE domain), GGA2 (via GAE domain) and GGA3 (via GAE domain). Interacts with AP1G1 (via GAE domain). Interacts with AP1G2 (via GAE domain). Interacts with ECPAS. Interacts with KCNH1. Interacts with PKD1 (via C-terminal domain) and GGA1; the interactions recruit PKD1:PKD2 complex to GGA1 and ARL3 at trans-Golgi network. Interacts with KCNH1. In terms of processing, proteolytic cleavage by caspases in apoptotic cells causes loss of endosome fusion activity.

It localises to the cytoplasm. The protein localises to the early endosome. The protein resides in the recycling endosome. Its subcellular location is the cytoplasmic vesicle. In terms of biological role, rab effector protein acting as linker between gamma-adaptin, RAB4A and RAB5A. Involved in endocytic membrane fusion and membrane trafficking of recycling endosomes. Involved in KCNH1 channels trafficking to and from the cell membrane. Stimulates RABGEF1 mediated nucleotide exchange on RAB5A. Mediates the traffic of PKD1:PKD2 complex from the endoplasmic reticulum through the Golgi to the cilium. The sequence is that of Rab GTPase-binding effector protein 1 (Rabep1) from Rattus norvegicus (Rat).